We begin with the raw amino-acid sequence, 251 residues long: Segregation and condensation protein A (251 aa).

It belongs to the ScpA family. In terms of assembly, component of a cohesin-like complex composed of ScpA, ScpB and the Smc homodimer, in which ScpA and ScpB bind to the head domain of Smc. The presence of the three proteins is required for the association of the complex with DNA.

It is found in the cytoplasm. Functionally, participates in chromosomal partition during cell division. May act via the formation of a condensin-like complex containing Smc and ScpB that pull DNA away from mid-cell into both cell halves. In Clostridium botulinum (strain Eklund 17B / Type B), this protein is Segregation and condensation protein A.